The primary structure comprises 497 residues: 3-octaprenyl-4-hydroxybenzoate carboxy-lyase (497 aa).

N172 is a Mn(2+) binding site. Residues I175–R177, R189–L191, and R194–G195 contribute to the prenylated FMN site. E238 serves as a coordination point for Mn(2+). The Proton donor role is filled by D287.

This sequence belongs to the UbiD family. In terms of assembly, homohexamer. Prenylated FMN is required as a cofactor. Requires Mn(2+) as cofactor.

Its subcellular location is the cell membrane. It carries out the reaction a 4-hydroxy-3-(all-trans-polyprenyl)benzoate + H(+) = a 2-(all-trans-polyprenyl)phenol + CO2. The protein operates within cofactor biosynthesis; ubiquinone biosynthesis. Catalyzes the decarboxylation of 3-octaprenyl-4-hydroxy benzoate to 2-octaprenylphenol, an intermediate step in ubiquinone biosynthesis. The polypeptide is 3-octaprenyl-4-hydroxybenzoate carboxy-lyase (Enterobacter sp. (strain 638)).